A 269-amino-acid chain; its full sequence is Adenosylcobinamide-GDP ribazoletransferase (269 aa).

6 consecutive transmembrane segments (helical) span residues 63 to 83, 87 to 107, 137 to 157, 158 to 178, 202 to 222, and 246 to 266; these read SAYY…LLYL, LPPG…TGML, VGAF…SLLG, AGLP…VVLM, LAFL…AALV, and VYGL…GWGF.

The protein belongs to the CobS family. The cofactor is Mg(2+).

It is found in the cell membrane. The enzyme catalyses alpha-ribazole + adenosylcob(III)inamide-GDP = adenosylcob(III)alamin + GMP + H(+). The catalysed reaction is alpha-ribazole 5'-phosphate + adenosylcob(III)inamide-GDP = adenosylcob(III)alamin 5'-phosphate + GMP + H(+). Its pathway is cofactor biosynthesis; adenosylcobalamin biosynthesis; adenosylcobalamin from cob(II)yrinate a,c-diamide: step 7/7. In terms of biological role, joins adenosylcobinamide-GDP and alpha-ribazole to generate adenosylcobalamin (Ado-cobalamin). Also synthesizes adenosylcobalamin 5'-phosphate from adenosylcobinamide-GDP and alpha-ribazole 5'-phosphate. The polypeptide is Adenosylcobinamide-GDP ribazoletransferase (Deinococcus radiodurans (strain ATCC 13939 / DSM 20539 / JCM 16871 / CCUG 27074 / LMG 4051 / NBRC 15346 / NCIMB 9279 / VKM B-1422 / R1)).